The sequence spans 118 residues: Na(+)/H(+) antiporter subunit G1 (118 aa).

The next 3 membrane-spanning stretches (helical) occupy residues 9-29, 41-61, and 70-90; these read IALILVIIGSLISALAAIGIL, AGKAATLGAMLLISGVFLFFI, and QLIVGILFILITGPLASHLII.

This sequence belongs to the CPA3 antiporters (TC 2.A.63) subunit G family. As to quaternary structure, may form a heterooligomeric complex that consists of seven subunits: mnhA1, mnhB1, mnhC1, mnhD1, mnhE1, mnhF1 and mnhG1.

It is found in the cell membrane. Mnh complex is a Na(+)/H(+) antiporter involved in Na(+) excretion. In Staphylococcus saprophyticus subsp. saprophyticus (strain ATCC 15305 / DSM 20229 / NCIMB 8711 / NCTC 7292 / S-41), this protein is Na(+)/H(+) antiporter subunit G1 (mnhG1).